The primary structure comprises 353 residues: Quinolinate synthase (353 aa).

Residues His47 and Ser68 each coordinate iminosuccinate. [4Fe-4S] cluster is bound at residue Cys113. Iminosuccinate is bound by residues 139-141 (YAN) and Ser156. [4Fe-4S] cluster is bound at residue Cys200. Residues 226-228 (HPE) and Thr243 each bind iminosuccinate. [4Fe-4S] cluster is bound at residue Cys297.

This sequence belongs to the quinolinate synthase family. Type 1 subfamily. The cofactor is [4Fe-4S] cluster.

The protein localises to the cytoplasm. It carries out the reaction iminosuccinate + dihydroxyacetone phosphate = quinolinate + phosphate + 2 H2O + H(+). It participates in cofactor biosynthesis; NAD(+) biosynthesis; quinolinate from iminoaspartate: step 1/1. Functionally, catalyzes the condensation of iminoaspartate with dihydroxyacetone phosphate to form quinolinate. The polypeptide is Quinolinate synthase (Vibrio parahaemolyticus serotype O3:K6 (strain RIMD 2210633)).